The sequence spans 195 residues: PBAN-type neuropeptides (195 aa).

Positions 1-33 are cleaved as a signal peptide; that stretch reads MIGFAVFSSFNRFTTIFVCVLLCVVYLLSYASG. Residues 34-63 constitute a propeptide that is removed on maturation; sequence EYDGRDSSSGSNNDRAPSNEFGSCTDGKCI. A Leucine amide modification is found at L80. Positions 86 to 117 are excised as a propeptide; that stretch reads ADRKPEINSDIEAFANAFEEPHWAIVTIPETE. Position 120 is a pyrrolidone carboxylic acid (Q120). L128 carries the post-translational modification Leucine amide. The propeptide occupies 131–153; it reads ESGEDYFSYGFPKDQEELYTEEQ. A leucine amide mark is found at L163 and L175. Residues 178–195 constitute a propeptide that is removed on maturation; the sequence is QLHNIVDKPRQNFNDPRF.

It belongs to the pyrokinin family.

Its subcellular location is the secreted. Functionally, a hormone that controls sex pheromone production in females and pheromone responsiveness in male. Also mediates visceral muscle contractile activity (myotropic activity). The sequence is that of PBAN-type neuropeptides from Apis mellifera (Honeybee).